The chain runs to 1287 residues: Rho GTPase-activating protein 33 (1287 aa).

The tract at residues 1–40 (MVARSTDSLDGPGEGSVQPLPTAGGPSVKGKPGKRLSAPR) is disordered. Serine 8 carries the phosphoserine modification. In terms of domain architecture, PX; atypical spans 59-168 (FGHIQLLLSP…CGPVLTWMEL (110 aa)). Residues 186–248 (PAVAAAHVIK…PSECVELFTE (63 aa)) enclose the SH3 domain. The Rho-GAP domain occupies 315–510 (CDLGEHLSNS…FLLTHVDVLF (196 aa)). Disordered stretches follow at residues 551 to 792 (RTQG…SPAA), 813 to 832 (AGGAPASATPTPALSPGRSL), 859 to 1030 (KLRG…VPTP), 1056 to 1075 (GPPSFQPSSPAPVWRSSLGP), 1090 to 1134 (GASE…SPDF), and 1146 to 1287 (PPDH…RSYC). Residues 558–571 (TPTEPTTPKAPASP) are compositionally biased toward low complexity. Position 570 is a phosphoserine (serine 570). The span at 572–584 (AERRKGERGEKQR) shows a compositional bias: basic and acidic residues. A compositionally biased stretch (polar residues) spans 622–645 (SGSRPDTVTLRSAKSEESLSSQAS). Serine 636 carries the phosphoserine modification. The segment covering 672 to 709 (AGSCESLSSSSSSESSSSESSSSSSESSAAGLGALSGS) has biased composition (low complexity). At serine 727 the chain carries Phosphoserine. A compositionally biased stretch (pro residues) spans 752–766 (PGDPAPPASPAPPAP). Low complexity-rich tracts occupy residues 813-829 (AGGAPASATPTPALSPG) and 896-919 (PARLMALALAERAQQVAEQQSQQE). Polar residues-rich tracts occupy residues 972-981 (RQQSDGSLLR) and 1019-1028 (SPCSVPSQVP). Tyrosine 1169 is modified (phosphotyrosine). Over residues 1175–1189 (GPRGPSPASSSSSSP) the composition is skewed to low complexity. Arginine 1244 is modified (omega-N-methylarginine). Positions 1274–1287 (SWSLHSEGQTRSYC) are enriched in polar residues.

This sequence belongs to the PX domain-containing GAP family. Specifically interacts with CDC42 and RHOQ/TC10 through its Rho-GAP domain. Interacts with NEK6.

In terms of biological role, may be involved in several stages of intracellular trafficking. Could play an important role in the regulation of glucose transport by insulin. May act as a downstream effector of RHOQ/TC10 in the regulation of insulin-stimulated glucose transport. This is Rho GTPase-activating protein 33 (ARHGAP33) from Homo sapiens (Human).